We begin with the raw amino-acid sequence, 439 residues long: MSIDVNWRFATSGPDGEALAERIRSFIHDRFQQVALPRFIRSVQVHAFDFGTIPPELEIKDFCEPFADFYEEDDDDHTSDASEERGEEHSSRWNSTHPELNEPSYREDTAVNHSLRDPFPDGFPTSPLRSPLGEHLNPHFLPRASTPGIPGGTSTLGYHLMSLGGLSGTQTPLAAVAGGNPFASGWSDSGMGPGNRGRSETHAGMQHPRAEPEIDTSNSTSRPSTANTLPSHPSGSSKNSGQAATGRNDHPSLHAGEHLEDSVTQGQLPLPPRMRERRPEDFQVLCHVKYAGDVRLSLTAEILLDYPMPSFVGLPLKLNVTGITFDGVAVIAYIRKRVHFCFLSAEDADALIGPEQQQQRESAGDDHRPQSRPDSSASASQKRHGGLLQEIRVESEIGRKEDGKQVLKNVGKVERFVLAQVRRIFEEELVYPSFWTFLI.

The 439-residue stretch at 1-439 (MSIDVNWRFA…VYPSFWTFLI (439 aa)) folds into the SMP-LTD domain. Disordered stretches follow at residues 70–103 (YEEDDDDHTSDASEERGEEHSSRWNSTHPELNEP), 185–274 (GWSD…PPRM), and 354–386 (PEQQQQRESAGDDHRPQSRPDSSASASQKRHGG). Basic and acidic residues predominate over residues 78–91 (TSDASEERGEEHSS). Residues 215 to 245 (DTSNSTSRPSTANTLPSHPSGSSKNSGQAAT) are compositionally biased toward polar residues. Composition is skewed to basic and acidic residues over residues 247 to 261 (RNDHPSLHAGEHLED) and 362 to 371 (SAGDDHRPQS).

This sequence belongs to the MDM12 family. As to quaternary structure, component of the ER-mitochondria encounter structure (ERMES) or MDM complex, composed of mmm1, mdm10, mdm12 and mdm34. A mmm1 homodimer associates with one molecule of mdm12 on each side in a pairwise head-to-tail manner, and the SMP-LTD domains of mmm1 and mdm12 generate a continuous hydrophobic tunnel for phospholipid trafficking.

Its subcellular location is the mitochondrion outer membrane. The protein localises to the endoplasmic reticulum membrane. Its function is as follows. Component of the ERMES/MDM complex, which serves as a molecular tether to connect the endoplasmic reticulum (ER) and mitochondria. Components of this complex are involved in the control of mitochondrial shape and protein biogenesis, and function in nonvesicular lipid trafficking between the ER and mitochondria. Mdm12 is required for the interaction of the ER-resident membrane protein mmm1 and the outer mitochondrial membrane-resident beta-barrel protein mdm10. The mdm12-mmm1 subcomplex functions in the major beta-barrel assembly pathway that is responsible for biogenesis of all mitochondrial outer membrane beta-barrel proteins, and acts in a late step after the SAM complex. The mdm10-mdm12-mmm1 subcomplex further acts in the TOM40-specific pathway after the action of the mdm12-mmm1 complex. Essential for establishing and maintaining the structure of mitochondria and maintenance of mtDNA nucleoids. In Aspergillus fumigatus (strain CBS 144.89 / FGSC A1163 / CEA10) (Neosartorya fumigata), this protein is Mitochondrial distribution and morphology protein 12.